A 397-amino-acid polypeptide reads, in one-letter code: 1-deoxy-D-xylulose 5-phosphate reductoisomerase (397 aa).

NADPH-binding residues include Thr10, Gly11, Ser12, Ile13, Asn38, and Asn125. Lys126 serves as a coordination point for 1-deoxy-D-xylulose 5-phosphate. Glu127 serves as a coordination point for NADPH. Asp151 is a Mn(2+) binding site. 1-deoxy-D-xylulose 5-phosphate is bound by residues Ser152, Glu153, Ser187, and His210. Residue Glu153 participates in Mn(2+) binding. Residue Gly216 participates in NADPH binding. Residues Ser223, Asn228, Lys229, and Glu232 each contribute to the 1-deoxy-D-xylulose 5-phosphate site. Glu232 contributes to the Mn(2+) binding site.

It belongs to the DXR family. In terms of assembly, homodimer. It depends on Mg(2+) as a cofactor. Requires Mn(2+) as cofactor.

It carries out the reaction 2-C-methyl-D-erythritol 4-phosphate + NADP(+) = 1-deoxy-D-xylulose 5-phosphate + NADPH + H(+). Its pathway is isoprenoid biosynthesis; isopentenyl diphosphate biosynthesis via DXP pathway; isopentenyl diphosphate from 1-deoxy-D-xylulose 5-phosphate: step 1/6. Its function is as follows. Catalyzes the NADPH-dependent rearrangement and reduction of 1-deoxy-D-xylulose-5-phosphate (DXP) to 2-C-methyl-D-erythritol 4-phosphate (MEP). The sequence is that of 1-deoxy-D-xylulose 5-phosphate reductoisomerase from Blochmanniella pennsylvanica (strain BPEN).